A 226-amino-acid chain; its full sequence is Ribonuclease 3 (226 aa).

One can recognise an RNase III domain in the interval 6 to 128 (INRLQRKLGY…LIGGVFLDSD (123 aa)). Mg(2+) is bound at residue glutamate 41. Aspartate 45 is an active-site residue. Aspartate 114 and glutamate 117 together coordinate Mg(2+). The active site involves glutamate 117. Residues 155 to 225 (DPKTRLQEYL…AEQALKKLEL (71 aa)) enclose the DRBM domain.

The protein belongs to the ribonuclease III family. As to quaternary structure, homodimer. It depends on Mg(2+) as a cofactor.

It localises to the cytoplasm. It catalyses the reaction Endonucleolytic cleavage to 5'-phosphomonoester.. In terms of biological role, digests double-stranded RNA. Involved in the processing of primary rRNA transcript to yield the immediate precursors to the large and small rRNAs (23S and 16S). Processes some mRNAs, and tRNAs when they are encoded in the rRNA operon. Processes pre-crRNA and tracrRNA of type II CRISPR loci if present in the organism. In Escherichia coli O139:H28 (strain E24377A / ETEC), this protein is Ribonuclease 3.